The primary structure comprises 154 residues: Iron-sulfur cluster assembly 2 homolog, mitochondrial (154 aa).

Residues 1 to 8 constitute a mitochondrion transit peptide; the sequence is MAASRALS. Cys-79, Cys-144, and Cys-146 together coordinate Fe cation.

It belongs to the HesB/IscA family. In terms of assembly, heterotetramer; forms a dimer of dimers with IBA57. Interacts with [2Fe-2S]-ISCA2 forming the heterodimer [2Fe- 2S]-ISCA2-IBA57 complex; [2Fe-2S] cluster binding is absolutely required to promote the complex formation.

It localises to the mitochondrion. Involved in the maturation of mitochondrial 4Fe-4S proteins functioning late in the iron-sulfur cluster assembly pathway. May be involved in the binding of an intermediate of Fe/S cluster assembly. This Mus musculus (Mouse) protein is Iron-sulfur cluster assembly 2 homolog, mitochondrial (Isca2).